The chain runs to 277 residues: Probable septum site-determining protein MinC (277 aa).

The interval 107-168 (TEGLLPGRKG…ESGPQVSHYD (62 aa)) is disordered. Over residues 122–142 (GKPDGKAAEGRAPDHGTEGRA) the composition is skewed to basic and acidic residues.

This sequence belongs to the MinC family. In terms of assembly, interacts with MinD and FtsZ.

In terms of biological role, cell division inhibitor that blocks the formation of polar Z ring septums. Rapidly oscillates between the poles of the cell to destabilize FtsZ filaments that have formed before they mature into polar Z rings. Prevents FtsZ polymerization. In Mesorhizobium japonicum (strain LMG 29417 / CECT 9101 / MAFF 303099) (Mesorhizobium loti (strain MAFF 303099)), this protein is Probable septum site-determining protein MinC.